Here is an 807-residue protein sequence, read N- to C-terminus: DNA gyrase subunit B (807 aa).

The Toprim domain occupies S429–P543. Mg(2+) contacts are provided by E435, D508, and D510.

This sequence belongs to the type II topoisomerase GyrB family. As to quaternary structure, heterotetramer, composed of two GyrA and two GyrB chains. In the heterotetramer, GyrA contains the active site tyrosine that forms a transient covalent intermediate with DNA, while GyrB binds cofactors and catalyzes ATP hydrolysis. It depends on Mg(2+) as a cofactor. Requires Mn(2+) as cofactor. Ca(2+) is required as a cofactor.

It localises to the cytoplasm. It catalyses the reaction ATP-dependent breakage, passage and rejoining of double-stranded DNA.. A type II topoisomerase that negatively supercoils closed circular double-stranded (ds) DNA in an ATP-dependent manner to modulate DNA topology and maintain chromosomes in an underwound state. Negative supercoiling favors strand separation, and DNA replication, transcription, recombination and repair, all of which involve strand separation. Also able to catalyze the interconversion of other topological isomers of dsDNA rings, including catenanes and knotted rings. Type II topoisomerases break and join 2 DNA strands simultaneously in an ATP-dependent manner. The sequence is that of DNA gyrase subunit B from Rickettsia prowazekii (strain Madrid E).